The following is a 240-amino-acid chain: Sugar fermentation stimulation protein homolog (240 aa).

Belongs to the SfsA family.

This is Sugar fermentation stimulation protein homolog from Saccharolobus islandicus (strain M.16.4 / Kamchatka #3) (Sulfolobus islandicus).